Consider the following 128-residue polypeptide: uncharacterized protein (128 aa).

A run of 3 helical transmembrane segments spans residues 13–35, 42–64, and 90–112; these read FQMA…VFFV, IIAL…YNGG, and LVLT…SIIL.

It localises to the cell membrane. This is an uncharacterized protein from Methanocaldococcus jannaschii (strain ATCC 43067 / DSM 2661 / JAL-1 / JCM 10045 / NBRC 100440) (Methanococcus jannaschii).